A 1092-amino-acid chain; its full sequence is Probable cellulose synthase A catalytic subunit 5 [UDP-forming] (1092 aa).

The Cytoplasmic segment spans residues 1–279; sequence MEASAGLVAG…SSSLVNPYRM (279 aa). The Zn(2+) site is built by C39, C42, C58, C61, C66, C69, C81, and C84. The segment at 39–85 adopts an RING-type; degenerate zinc-finger fold; sequence CQICGDDVGLTPDGEPFVACNECAFPVCRDCYEYERREGTQNCPQCK. A helical membrane pass occupies residues 280 to 300; it reads IIIIRLVVLGFFFHYRVMHPV. The Extracellular segment spans residues 301 to 302; that stretch reads PD. A helical membrane pass occupies residues 303 to 323; the sequence is AFALWLISVICEIWFAMSWIL. Over 324–868 the chain is Cytoplasmic; sequence DQFPKWFPIE…CLERFSYINS (545 aa). UDP-alpha-D-glucose-binding residues include S362, K368, E369, and D398. The active site involves D398. Residues 450-479 are a coiled coil; sequence NFVRERRAMKREYEEFKVRINALVAKAQKV. Position 539 (K539) interacts with UDP-alpha-D-glucose. Mn(2+)-binding residues include K540 and D564. D792 is an active-site residue. The helical transmembrane segment at 869–889 threads the bilayer; sequence IVYPWTSIPLLAYCTLPAICL. The Extracellular segment spans residues 890 to 901; that stretch reads LTGKFITPELTN. The helical transmembrane segment at 902–922 threads the bilayer; sequence IASLWFMSLFICIFATGILEM. The Cytoplasmic portion of the chain corresponds to 923–938; that stretch reads RWSGVGIDDWWRNEQF. A helical transmembrane segment spans residues 939–959; the sequence is WVIGGVSSHLFAVFQGLLKVI. Topologically, residues 960-987 are extracellular; that stretch reads AGIDTSFTVTSKGGDDEEFSELYTFKWT. A helical transmembrane segment spans residues 988 to 1008; that stretch reads TLLIPPTTLLLLNFIGVVAGV. Residues 1009-1019 are Cytoplasmic-facing; the sequence is SNAINNGYESW. Residues 1020 to 1040 form a helical membrane-spanning segment; sequence GPLFGKLFFAFWVIVHLYPFL. Over 1041 to 1049 the chain is Extracellular; that stretch reads KGLVGRQNR. Residues 1050 to 1070 traverse the membrane as a helical segment; that stretch reads TPTIVIVWSILLASIFSLLWV. The Cytoplasmic portion of the chain corresponds to 1071–1092; the sequence is RIDPFLAKNDGPLLEECGLDCN.

Belongs to the glycosyltransferase 2 family. Plant cellulose synthase subfamily. Requires Mn(2+) as cofactor. It depends on Zn(2+) as a cofactor.

The protein resides in the cell membrane. The enzyme catalyses [(1-&gt;4)-beta-D-glucosyl](n) + UDP-alpha-D-glucose = [(1-&gt;4)-beta-D-glucosyl](n+1) + UDP + H(+). It participates in glycan metabolism; plant cellulose biosynthesis. Probable catalytic subunit of cellulose synthase terminal complexes ('rosettes'), required for beta-1,4-glucan microfibril crystallization, a major mechanism of the cell wall formation. This is Probable cellulose synthase A catalytic subunit 5 [UDP-forming] (CESA5) from Oryza sativa subsp. indica (Rice).